Consider the following 1047-residue polypeptide: Carbamoyl phosphate synthase arginine-specific large chain (1047 aa).

The interval Met-1–Glu-401 is carboxyphosphate synthetic domain. The ATP site is built by Arg-129, Arg-169, Gly-175, Gly-176, Lys-208, Ile-210, Glu-215, Gly-241, Val-242, His-243, Gln-284, and Glu-298. In terms of domain architecture, ATP-grasp 1 spans Arg-133 to Leu-327. The Mg(2+) site is built by Gln-284, Glu-298, and Asn-300. Positions 284, 298, and 300 each coordinate Mn(2+). The interval Ile-402–Leu-549 is oligomerization domain. The interval Leu-550–Glu-933 is carbamoyl phosphate synthetic domain. Positions Tyr-676–Phe-865 constitute an ATP-grasp 2 domain. The ATP site is built by Arg-712, Ala-750, Glu-756, Gly-781, Val-782, His-783, Ser-784, Gln-824, and Glu-836. Mg(2+) is bound by residues Gln-824, Glu-836, and Asn-838. Gln-824, Glu-836, and Asn-838 together coordinate Mn(2+). Positions Glu-934–Asn-1047 are allosteric domain. Residues Pro-937–Asn-1047 form the MGS-like domain.

The protein belongs to the CarB family. In terms of assembly, composed of two chains; the small (or glutamine) chain promotes the hydrolysis of glutamine to ammonia, which is used by the large (or ammonia) chain to synthesize carbamoyl phosphate. Tetramer of heterodimers (alpha,beta)4. Mg(2+) is required as a cofactor. It depends on Mn(2+) as a cofactor.

The catalysed reaction is hydrogencarbonate + L-glutamine + 2 ATP + H2O = carbamoyl phosphate + L-glutamate + 2 ADP + phosphate + 2 H(+). The enzyme catalyses hydrogencarbonate + NH4(+) + 2 ATP = carbamoyl phosphate + 2 ADP + phosphate + 2 H(+). The protein operates within amino-acid biosynthesis; L-arginine biosynthesis; carbamoyl phosphate from bicarbonate: step 1/1. Large subunit of the glutamine-dependent carbamoyl phosphate synthetase (CPSase). CPSase catalyzes the formation of carbamoyl phosphate from the ammonia moiety of glutamine, carbonate, and phosphate donated by ATP, constituting the first step of the biosynthetic pathway leading to arginine and/or urea. The large subunit (synthetase) binds the substrates ammonia (free or transferred from glutamine from the small subunit), hydrogencarbonate and ATP and carries out an ATP-coupled ligase reaction, activating hydrogencarbonate by forming carboxy phosphate which reacts with ammonia to form carbamoyl phosphate. This is Carbamoyl phosphate synthase arginine-specific large chain from Halalkalibacterium halodurans (strain ATCC BAA-125 / DSM 18197 / FERM 7344 / JCM 9153 / C-125) (Bacillus halodurans).